The sequence spans 151 residues: uncharacterized protein (151 aa).

The [4Fe-4S] cluster site is built by C24, C27, C92, and C129.

This sequence belongs to the complex I 20 kDa subunit family. [4Fe-4S] cluster is required as a cofactor.

This is an uncharacterized protein from Methanocaldococcus jannaschii (strain ATCC 43067 / DSM 2661 / JAL-1 / JCM 10045 / NBRC 100440) (Methanococcus jannaschii).